We begin with the raw amino-acid sequence, 153 residues long: Prefoldin subunit alpha (153 aa).

The interval K126–E153 is disordered. The segment covering H143–E153 has biased composition (basic and acidic residues).

This sequence belongs to the prefoldin alpha subunit family. In terms of assembly, heterohexamer of two alpha and four beta subunits.

The protein localises to the cytoplasm. Its function is as follows. Molecular chaperone capable of stabilizing a range of proteins. Seems to fulfill an ATP-independent, HSP70-like function in archaeal de novo protein folding. The protein is Prefoldin subunit alpha of Methanoregula boonei (strain DSM 21154 / JCM 14090 / 6A8).